Consider the following 262-residue polypeptide: tRNA pseudouridine synthase A (262 aa).

Aspartate 55 acts as the Nucleophile in catalysis. Tyrosine 116 serves as a coordination point for substrate.

It belongs to the tRNA pseudouridine synthase TruA family. Homodimer.

The enzyme catalyses uridine(38/39/40) in tRNA = pseudouridine(38/39/40) in tRNA. Functionally, formation of pseudouridine at positions 38, 39 and 40 in the anticodon stem and loop of transfer RNAs. In Bdellovibrio bacteriovorus (strain ATCC 15356 / DSM 50701 / NCIMB 9529 / HD100), this protein is tRNA pseudouridine synthase A.